A 459-amino-acid chain; its full sequence is NADH oxidase (459 aa).

Position 10 (Asn10) interacts with FAD. The active-site Proton acceptor is the His11. Residues Ala12, Asp34, Gln35, Cys44, Val81, Ala110, Ser113, Lys143, and Tyr172 each contribute to the FAD site. Cys44 functions as the Redox-active in the catalytic mechanism. A Cysteine sulfinic acid (-SO2H) modification is found at Cys44. The NAD(+) site is built by Ile173, Asp192, Tyr201, and Gly256. Residue Asp294 coordinates FAD. Residue Ala310 participates in NAD(+) binding. 3 residues coordinate FAD: Leu311, Ala312, and Ser313. Residue Gly341 participates in NAD(+) binding. Phe439 serves as a coordination point for FAD.

This sequence belongs to the class-III pyridine nucleotide-disulfide oxidoreductase family. FAD serves as cofactor.

The protein localises to the secreted. Its subcellular location is the cell wall. The enzyme catalyses 2 NADH + O2 + 2 H(+) = 2 NAD(+) + 2 H2O. Its function is as follows. Catalyzes the four-electron reduction of molecular oxygen to water. Plays a role in redox balance maintenance. May be involved in mediating bacterial adhesion to host cells. May be considered a potential virulence factor. This chain is NADH oxidase, found in Streptococcus pneumoniae serotype 4 (strain ATCC BAA-334 / TIGR4).